A 285-amino-acid chain; its full sequence is Protein HtrL (285 aa).

This is Protein HtrL from Escherichia coli (strain K12).